Consider the following 201-residue polypeptide: Glycerol-3-phosphate acyltransferase (201 aa).

5 consecutive transmembrane segments (helical) span residues Met-10–Leu-30, Leu-60–Ala-80, Ala-86–Phe-106, Leu-116–Val-136, and Ala-166–Ile-186.

Belongs to the PlsY family. As to quaternary structure, probably interacts with PlsX.

The protein localises to the cell inner membrane. It carries out the reaction an acyl phosphate + sn-glycerol 3-phosphate = a 1-acyl-sn-glycero-3-phosphate + phosphate. It participates in lipid metabolism; phospholipid metabolism. Its function is as follows. Catalyzes the transfer of an acyl group from acyl-phosphate (acyl-PO(4)) to glycerol-3-phosphate (G3P) to form lysophosphatidic acid (LPA). This enzyme utilizes acyl-phosphate as fatty acyl donor, but not acyl-CoA or acyl-ACP. This Brucella canis (strain ATCC 23365 / NCTC 10854 / RM-666) protein is Glycerol-3-phosphate acyltransferase.